We begin with the raw amino-acid sequence, 959 residues long: Oxysterol-binding protein-related protein 6 (959 aa).

The tract at residues Met1–Pro60 is disordered. Ser2 is subject to N-acetylserine. Residues Thr14–Gln29 are compositionally biased toward low complexity. The span at Arg30–Glu40 shows a compositional bias: basic and acidic residues. The residue at position 35 (Ser35) is a Phosphoserine. Positions Thr42 to Arg53 are enriched in polar residues. In terms of domain architecture, PH spans Pro86–Leu181. Residues Ser190 and Ser290 each carry the phosphoserine modification.

The protein belongs to the OSBP family. Homodimer. Interacts with OSBPL3. In terms of tissue distribution, expressed in skin, respiratory epithelium, small intestine epithelium, pancreas, striated muscle, brain, spinal ganglia, and nervous plexus of the intestine (at protein level). In the brain, specifically in the cerebellum, it is expressed in Purkinje and granule cells. Expressed in hepatocytes and macrophages.

The protein resides in the nucleus envelope. The protein localises to the cytoplasm. Its subcellular location is the cytosol. It localises to the endoplasmic reticulum membrane. It is found in the cell membrane. The protein resides in the endosome membrane. Regulates cellular transport and efflux of cholesterol. Plays a role in phosphatidylinositol-4-phophate (PI4P) turnover at the neuronal membrane. Binds via its PH domain PI4P, phosphatidylinositol-4,5-diphosphate, phosphatidylinositol-3,4,5-triphosphate, and phosphatidic acid. Weakly binds 25-hydroxycholesterol. This chain is Oxysterol-binding protein-related protein 6 (Osbpl6), found in Mus musculus (Mouse).